The following is a 128-amino-acid chain: Translation initiation factor 5A (128 aa).

Hypusine is present on lysine 35.

It belongs to the eIF-5A family.

It is found in the cytoplasm. In terms of biological role, functions by promoting the formation of the first peptide bond. The protein is Translation initiation factor 5A (eif5a) of Archaeoglobus fulgidus (strain ATCC 49558 / DSM 4304 / JCM 9628 / NBRC 100126 / VC-16).